The sequence spans 355 residues: tRNA N6-adenosine threonylcarbamoyltransferase (355 aa).

Fe cation is bound by residues His-113 and His-117. Substrate contacts are provided by residues 135–139 (LASGG), Asp-168, Gly-181, and Asn-279. Residue Asp-307 participates in Fe cation binding.

The protein belongs to the KAE1 / TsaD family. Fe(2+) is required as a cofactor.

Its subcellular location is the cytoplasm. It carries out the reaction L-threonylcarbamoyladenylate + adenosine(37) in tRNA = N(6)-L-threonylcarbamoyladenosine(37) in tRNA + AMP + H(+). Functionally, required for the formation of a threonylcarbamoyl group on adenosine at position 37 (t(6)A37) in tRNAs that read codons beginning with adenine. Is involved in the transfer of the threonylcarbamoyl moiety of threonylcarbamoyl-AMP (TC-AMP) to the N6 group of A37, together with TsaE and TsaB. TsaD likely plays a direct catalytic role in this reaction. The chain is tRNA N6-adenosine threonylcarbamoyltransferase from Bradyrhizobium sp. (strain BTAi1 / ATCC BAA-1182).